A 508-amino-acid chain; its full sequence is MGLPWYRVHTVVLNDPGRLLSVHIMHTALVSGWAGSMALYELAVFDPSDPVLDPMWRQGMFVIPFMTRLGITNSWGGWNITGGTITNPGLWSYEGVAAAHIVFSGLCFLAAIWHWVYWDLEIFCDERTGKPSLDLPKIFGIHLFLSGVACFGFGAFHVTGLYGPGIWVSDPYGLTGKVQPVNPAWGVEGFDPFVPGGIASHHIAAGTLGILAGLFHLSVRPPQRLYKGLRMGNIETVLSSSIAAVFFAAFVVAGTMWYGSATTPIELFGPTRYQWDQGYFQQEIYRRVSAGLAENQSVSEAWSKIPEKLAFYDYIGNNPAKGGLFRAGSMDNGDGIAVGWLGHPVFRNKEGRELFVRRMPTFFETFPVVLVDGDGIVRADVPFRRAESKYSVEQVGVTVEFYGGELNGVSYSDPATVKKYARRAQLGEIFELDRATLKSDGVFRSSPRGWFTFGHASFALLFFFGHIWHGSRTLFRDVFAGIDPDLDAQVEFGAFQKLGDPTTKRQAV.

6 helical membrane-spanning segments follow: residues 21-36 (SVHI…WAGS), 101-115 (IVFS…IWHW), 140-156 (GIHL…FGAF), 203-218 (IAAG…FHLS), 237-252 (VLSS…AFVV), and 457-472 (SFAL…HGSR).

Belongs to the PsbB/PsbC family. PsbB subfamily. As to quaternary structure, PSII is composed of 1 copy each of membrane proteins PsbA, PsbB, PsbC, PsbD, PsbE, PsbF, PsbH, PsbI, PsbJ, PsbK, PsbL, PsbM, PsbT, PsbX, PsbY, PsbZ, Psb30/Ycf12, at least 3 peripheral proteins of the oxygen-evolving complex and a large number of cofactors. It forms dimeric complexes. The cofactor is Binds multiple chlorophylls. PSII binds additional chlorophylls, carotenoids and specific lipids..

It localises to the plastid. It is found in the chloroplast thylakoid membrane. Functionally, one of the components of the core complex of photosystem II (PSII). It binds chlorophyll and helps catalyze the primary light-induced photochemical processes of PSII. PSII is a light-driven water:plastoquinone oxidoreductase, using light energy to abstract electrons from H(2)O, generating O(2) and a proton gradient subsequently used for ATP formation. In Lobularia maritima (Sweet alyssum), this protein is Photosystem II CP47 reaction center protein.